We begin with the raw amino-acid sequence, 154 residues long: Superoxide dismutase [Cu-Zn] (154 aa).

Cu cation contacts are provided by His47, His49, and His64. Cys58 and Cys147 are joined by a disulfide. Positions 64, 72, 81, and 84 each coordinate Zn(2+). His121 lines the Cu cation pocket. Residues 124 to 137 (TDDLGKGENEESKK) are compositionally biased toward basic and acidic residues. Residues 124–144 (TDDLGKGENEESKKTGNAGTR) are disordered. Arg144 contacts substrate.

It belongs to the Cu-Zn superoxide dismutase family. As to quaternary structure, homodimer. Cu cation is required as a cofactor. Zn(2+) serves as cofactor.

It is found in the cytoplasm. It carries out the reaction 2 superoxide + 2 H(+) = H2O2 + O2. Functionally, destroys radicals which are normally produced within the cells and which are toxic to biological systems. The polypeptide is Superoxide dismutase [Cu-Zn] (sod1) (Botryotinia fuckeliana (Noble rot fungus)).